The sequence spans 493 residues: MSLLKMEYNLYAELKKMTCGQTISLFNEDGDFVEVEPGSSFKFLIPKGFYSSPSVKTSLVFETLTTTDNKITSINPTNAPKLYPLQRKVVSEVVSNMRKMIELKRPLYITLHLACGFGKTITTCYLMATHGRKTVICVPNKMLIHQWKTQVEAVGLEHKISIDGVSSLLKELKTQSPDVLIVVSRHLTNDAFCKYINKHYDLFILDESHTYNLMNNTAVTRFLAYYPPMMCYFLTATPRPANRIYCNSIINIAKLSDLKKTIYVVDSFFEPYSTDNIRHMIKRLDGPSNKYHIYTEKLLSVDEPRNQLILNTLVEEFKSGTINRILVITKLREHMVLFYKRLLDLFGPEVVFIGDAQNRRTPDMVKSIKELNRFIFVSTLFYSGTGLDIPSLDSLFICSAVINNMQIEQLLGRVCRETELLDRTVYVFPNTSIKEIKYMIGNFVQRIISLSVDKLGFKQESYRKHQESDPTSACTASSREERVLNRIFNSQNR.

The Helicase ATP-binding domain maps to 100–256 (MIELKRPLYI…NSIINIAKLS (157 aa)). 113-120 (LACGFGKT) is an ATP binding site. A DESH box motif is present at residues 206–209 (DESH).

It belongs to the helicase family. Poxviruses subfamily. In terms of assembly, interacts with G2. Might be part of a transcription complex composed at least of G2, A18, and H5.

Its subcellular location is the virion. Functionally, DNA helicase which seems to act as a postreplicative transcription termination factor. Involved in ATP-dependent release of nascent RNA. Forms a stable complex with single-stranded DNA, and to a lesser extent RNA. The chain is Transcript termination protein A18 from Cowpox virus (strain GRI-90 / Grishak) (CPV).